The following is a 783-amino-acid chain: Cadherin-5 (783 aa).

The signal sequence occupies residues 1 to 25 (MQALVMLLATGATYYLGLLAAAAAA). The propeptide occupies 26-45 (VNPGRPNTPGSLPAHRRQKR). 5 Cadherin domains span residues 44-149 (KRDW…WPVF), 150-256 (THRV…FPIF), 257-371 (TQNR…PPIF), 372-478 (QQPF…APEF), and 478-585 (FAKP…GEFT). Residues 46–599 (DWIWNQMHID…AAAQVGISIQ (554 aa)) are Extracellular-facing. Ca(2+)-binding residues include Glu56 and Glu57. N-linked (GlcNAc...) asparagine glycosylation occurs at Asn59. Ca(2+) contacts are provided by Asp107, Glu109, Asp141, Val142, Asn143, Asp144, and Asn145. N-linked (GlcNAc...) asparagine glycosylation occurs at Asn155. The Ca(2+) site is built by Asp175, Asp177, His184, and Asp229. N-linked (GlcNAc...) asparagine glycosylation is found at Asn361, Asn441, and Asn523. A helical transmembrane segment spans residues 600 to 620 (ALVAIFLCILTFTVITLLIIL). A required for interaction with PALS1 region spans residues 621–660 (RRRLRKQARAHGKSVPEIHEQLVTYDEEGGGEMDTTSYDV). The Cytoplasmic portion of the chain corresponds to 621 to 783 (RRRLRKQARA…GSDPQEELVY (163 aa)).

In terms of assembly, part of a complex composed of AMOTL2, MAGI1 and CDH5, within the complex AMOTL2 acts as a scaffold protein for the interaction of MAGI1 with CDH5. The complex is required for coupling actin fibers to cell junctions in endothelial cells. Within the complex AMOTL2 (via its N-terminus) interacts with CDH5. Interacts (via cadherin 5 domain) with PTPRB. Interacts with TRPC4. Interacts with KRIT1. Interacts with PARD3. Interacts with RTN4 (isoform B). Interacts with PALS1; the interaction promotes PALS1 localization to cell junctions and is required for CDH5-mediated vascular lumen formation and endothelial cell. Interacts with CTNND1/p120-catenin; the interaction controls CADH5 endocytosis. In terms of processing, phosphorylated on tyrosine residues by KDR/VEGFR-2. Dephosphorylated by PTPRB. Post-translationally, O-glycosylated.

Its subcellular location is the cell junction. The protein resides in the adherens junction. It localises to the cell membrane. It is found in the cytoplasm. Functionally, cadherins are calcium-dependent cell adhesion proteins. They preferentially interact with themselves in a homophilic manner in connecting cells; cadherins may thus contribute to the sorting of heterogeneous cell types. This cadherin may play a important role in endothelial cell biology through control of the cohesion and organization of the intercellular junctions. It associates with alpha-catenin forming a link to the cytoskeleton. Plays a role in coupling actin fibers to cell junctions in endothelial cells, via acting as a cell junctional complex anchor for AMOTL2 and MAGI1. Acts in concert with KRIT1 and PALS1 to establish and maintain correct endothelial cell polarity and vascular lumen. These effects are mediated by recruitment and activation of the Par polarity complex and RAP1B. Required for activation of PRKCZ and for localization of phosphorylated PRKCZ, PARD3, TIAM1 and RAP1B to the cell junction. Associates with CTNND1/p120-catenin to control CADH5 endocytosis. The chain is Cadherin-5 from Bos taurus (Bovine).